Here is a 534-residue protein sequence, read N- to C-terminus: Phosphoenolpyruvate carboxykinase (ATP) (534 aa).

Residues arginine 60, tyrosine 195, and lysine 201 each coordinate substrate. ATP-binding positions include lysine 201, histidine 221, and 237 to 245; that span reads GLSGTGKTT. Mn(2+) is bound by residues lysine 201 and histidine 221. Residue aspartate 258 coordinates Mn(2+). ATP-binding residues include glutamate 287, arginine 324, and threonine 449. Arginine 324 lines the substrate pocket.

It belongs to the phosphoenolpyruvate carboxykinase (ATP) family. Mn(2+) serves as cofactor.

It is found in the cytoplasm. It carries out the reaction oxaloacetate + ATP = phosphoenolpyruvate + ADP + CO2. It participates in carbohydrate biosynthesis; gluconeogenesis. Functionally, involved in the gluconeogenesis. Catalyzes the conversion of oxaloacetate (OAA) to phosphoenolpyruvate (PEP) through direct phosphoryl transfer between the nucleoside triphosphate and OAA. In Flavobacterium johnsoniae (strain ATCC 17061 / DSM 2064 / JCM 8514 / BCRC 14874 / CCUG 350202 / NBRC 14942 / NCIMB 11054 / UW101) (Cytophaga johnsonae), this protein is Phosphoenolpyruvate carboxykinase (ATP).